Consider the following 461-residue polypeptide: Polycomb group protein FIE1 (461 aa).

Residues 1–11 (MPPSKARRKRS) are compositionally biased toward basic residues. Residues 1–56 (MPPSKARRKRSLRDITATVATGTVANSKPGSSSTNEGKQQDKKKEGPQEPDIPPLP) are disordered. Residues 18 to 37 (TVATGTVANSKPGSSSTNEG) are compositionally biased toward polar residues. A compositionally biased stretch (basic and acidic residues) spans 38 to 47 (KQQDKKKEGP). 6 WD repeats span residues 143–186 (DKDE…LDKS), 189–229 (GHGG…CILV), 235–275 (GHRH…IYVE), 301–338 (VHSD…RRPG), 351–391 (PKCS…PVLI), and 398–437 (ECKS…ASSS). The disordered stretch occupies residues 429 to 461 (EVDPAASSSKPDQAAAPAAGVGAGAGADADADA). Positions 432–448 (PAASSSKPDQAAAPAAG) are enriched in low complexity.

The protein belongs to the WD repeat ESC family. Specifically expressed in kernel starting from 6 days after pollination.

Its subcellular location is the nucleus. In terms of biological role, polycomb group (PcG) protein. PcG proteins act by forming multiprotein complexes, which are required to maintain the transcriptionally repressive state of homeotic genes throughout development. PcG proteins are not required to initiate repression, but to maintain it during later stages of development. They probably act via the methylation of histones, rendering chromatin heritably changed in its expressibility. This chain is Polycomb group protein FIE1 (FIE1), found in Zea mays (Maize).